Consider the following 140-residue polypeptide: Large ribosomal subunit protein uL11 (140 aa).

The protein belongs to the universal ribosomal protein uL11 family. Part of the ribosomal stalk of the 50S ribosomal subunit. Interacts with L10 and the large rRNA to form the base of the stalk. L10 forms an elongated spine to which L12 dimers bind in a sequential fashion forming a multimeric L10(L12)X complex. In terms of processing, one or more lysine residues are methylated.

Forms part of the ribosomal stalk which helps the ribosome interact with GTP-bound translation factors. The sequence is that of Large ribosomal subunit protein uL11 from Campylobacter hominis (strain ATCC BAA-381 / DSM 21671 / CCUG 45161 / LMG 19568 / NCTC 13146 / CH001A).